The sequence spans 367 residues: B2 bradykinin receptor (367 aa).

Residues 1-36 are Extracellular-facing; sequence MLNITSQVLAPALNGSVSQSSGCPNTEWSGWLNVIQ. 2 N-linked (GlcNAc...) asparagine glycosylation sites follow: N3 and N14. Residues 37–60 form a helical membrane-spanning segment; sequence APFLWVLFVLATLENLFVLSVFCL. Topologically, residues 61 to 69 are cytoplasmic; the sequence is HKSSCTVAE. The helical transmembrane segment at 70 to 94 threads the bilayer; sequence VYLGNLAAADLILACGLPFWAVTIA. Residues 95 to 107 lie on the Extracellular side of the membrane; sequence NHFDWLFGEALCR. An intrachain disulfide couples C106 to C187. Residues 108–129 form a helical membrane-spanning segment; it reads VVNTMIYMNLYSSICFLMLVSI. Residues 130–151 lie on the Cytoplasmic side of the membrane; the sequence is DRYLALVKTMSIGRMRRVRWAK. Y132 is subject to Phosphotyrosine. A helical membrane pass occupies residues 152 to 174; that stretch reads LYSLVIWGCTLLLSSPMLVFRTM. The Extracellular segment spans residues 175-197; the sequence is KDYRDEGYNVTACIIDYPSRSWE. N-linked (GlcNAc...) asparagine glycosylation occurs at N183. A helical membrane pass occupies residues 198 to 224; that stretch reads VFTNVLLNLVGFLLPLSVITFCTVQIL. The Cytoplasmic portion of the chain corresponds to 225 to 243; that stretch reads QVLRNNEMQKFKEIQTERR. A helical transmembrane segment spans residues 244–268; sequence ATVLVLAVLLLFVVCWLPFQVSTFL. Over 269-287 the chain is Extracellular; that stretch reads DTLLKLGVLSSCWDEHVID. The chain crosses the membrane as a helical span at residues 288-311; the sequence is VITQVGSFMGYSNSCLNPLVYVIV. Topologically, residues 312-367 are cytoplasmic; that stretch reads GKRFRKKSREVYRAACPKAGCVLEPVQAESSMGTLRTSISVERQIHKLPEWTRSSQ. Y323 is modified (phosphotyrosine). A lipid anchor (S-palmitoyl cysteine) is attached at C327. S342 carries the phosphoserine modification. T345 carries the phosphothreonine modification. A phosphoserine; by GRK6 mark is found at S349 and S351.

This sequence belongs to the G-protein coupled receptor 1 family. Bradykinin receptor subfamily. BDKRB2 sub-subfamily. As to quaternary structure, forms a complex with PECAM1 and GNAQ. Interacts with PECAM1.

It localises to the cell membrane. In terms of biological role, receptor for bradykinin. It is associated with G proteins that activate a phosphatidylinositol-calcium second messenger system. This Oryctolagus cuniculus (Rabbit) protein is B2 bradykinin receptor (BDKRB2).